Here is a 159-residue protein sequence, read N- to C-terminus: Phosphopantetheine adenylyltransferase (159 aa).

Substrate is bound at residue Ser10. ATP contacts are provided by residues 10-11 (SF) and His18. Substrate-binding residues include Lys42, Leu77, and Lys91. ATP is bound by residues 92-94 (GIR), Glu102, and 126-132 (NAHVSSS).

The protein belongs to the bacterial CoaD family. As to quaternary structure, homohexamer. Mg(2+) serves as cofactor.

Its subcellular location is the cytoplasm. The catalysed reaction is (R)-4'-phosphopantetheine + ATP + H(+) = 3'-dephospho-CoA + diphosphate. It participates in cofactor biosynthesis; coenzyme A biosynthesis; CoA from (R)-pantothenate: step 4/5. Its function is as follows. Reversibly transfers an adenylyl group from ATP to 4'-phosphopantetheine, yielding dephospho-CoA (dPCoA) and pyrophosphate. The sequence is that of Phosphopantetheine adenylyltransferase from Leifsonia xyli subsp. xyli (strain CTCB07).